We begin with the raw amino-acid sequence, 68 residues long: MPLVNIKLAKPSLSKEQKAELIADITELLSTKYNKSKERVVVVLEDVENYDIGFGGESVEAIKAKASK.

Residue P2 is the Proton acceptor; via imino nitrogen of the active site.

The protein belongs to the 4-oxalocrotonate tautomerase family.

The protein is Probable tautomerase Cj0270 of Campylobacter jejuni subsp. jejuni serotype O:2 (strain ATCC 700819 / NCTC 11168).